Reading from the N-terminus, the 308-residue chain is Thymidylate synthase (308 aa).

DUMP-binding positions include Arg26 and 170–171 (RR). The active-site Nucleophile is Cys190. DUMP-binding positions include 210–213 (RSCD), Asn221, and 251–253 (HVY). Residue Asp213 participates in (6R)-5,10-methylene-5,6,7,8-tetrahydrofolate binding. Residue Ala307 participates in (6R)-5,10-methylene-5,6,7,8-tetrahydrofolate binding.

The protein belongs to the thymidylate synthase family. Bacterial-type ThyA subfamily. Homodimer.

Its subcellular location is the cytoplasm. It carries out the reaction dUMP + (6R)-5,10-methylene-5,6,7,8-tetrahydrofolate = 7,8-dihydrofolate + dTMP. It participates in pyrimidine metabolism; dTTP biosynthesis. Functionally, catalyzes the reductive methylation of 2'-deoxyuridine-5'-monophosphate (dUMP) to 2'-deoxythymidine-5'-monophosphate (dTMP) while utilizing 5,10-methylenetetrahydrofolate (mTHF) as the methyl donor and reductant in the reaction, yielding dihydrofolate (DHF) as a by-product. This enzymatic reaction provides an intracellular de novo source of dTMP, an essential precursor for DNA biosynthesis. This Rhizorhabdus wittichii (strain DSM 6014 / CCUG 31198 / JCM 15750 / NBRC 105917 / EY 4224 / RW1) (Sphingomonas wittichii) protein is Thymidylate synthase.